A 241-amino-acid polypeptide reads, in one-letter code: Demethylmenaquinone methyltransferase (241 aa).

Residues Thr68, Asp88, and 114 to 115 (DA) contribute to the S-adenosyl-L-methionine site.

It belongs to the class I-like SAM-binding methyltransferase superfamily. MenG/UbiE family.

The enzyme catalyses a 2-demethylmenaquinol + S-adenosyl-L-methionine = a menaquinol + S-adenosyl-L-homocysteine + H(+). It participates in quinol/quinone metabolism; menaquinone biosynthesis; menaquinol from 1,4-dihydroxy-2-naphthoate: step 2/2. Methyltransferase required for the conversion of demethylmenaquinol (DMKH2) to menaquinol (MKH2). This Deinococcus radiodurans (strain ATCC 13939 / DSM 20539 / JCM 16871 / CCUG 27074 / LMG 4051 / NBRC 15346 / NCIMB 9279 / VKM B-1422 / R1) protein is Demethylmenaquinone methyltransferase.